Reading from the N-terminus, the 279-residue chain is Dermonecrotic toxin StSicTox-betaIB1i (279 aa).

H12 is an active-site residue. Mg(2+) is bound by residues E32 and D34. H48 acts as the Nucleophile in catalysis. 2 cysteine pairs are disulfide-bonded: C52–C58 and C54–C198. A Mg(2+)-binding site is contributed by D92.

It belongs to the arthropod phospholipase D family. Class II subfamily. Class IIb sub-subfamily. The cofactor is Mg(2+). Expressed by the venom gland.

Its subcellular location is the secreted. It carries out the reaction an N-(acyl)-sphingosylphosphocholine = an N-(acyl)-sphingosyl-1,3-cyclic phosphate + choline. The enzyme catalyses N-hexanoyl-sphing-4-enine-1-phosphocholine = N-(hexanoyl)-sphing-4-enine-1,3-cyclic phosphate + choline. The catalysed reaction is an N-(acyl)-sphingosylphosphoethanolamine = an N-(acyl)-sphingosyl-1,3-cyclic phosphate + ethanolamine. It catalyses the reaction N-dodecanoyl-heptadecasphing-4-enine-1-phosphoethanolamine = N-dodecanoyl-heptadecasphing-4-enine-1,3-cyclic phosphate + ethanolamine. It carries out the reaction a 1-acyl-sn-glycero-3-phosphoethanolamine = a 1-acyl-sn-glycero-2,3-cyclic phosphate + ethanolamine. The enzyme catalyses 1-tetradecanoyl-sn-glycero-3-phosphoethanolamine = 1-tetradecanoyl-sn-glycero-2,3-cyclic phosphate + ethanolamine. In terms of biological role, dermonecrotic toxins cleave the phosphodiester linkage between the phosphate and headgroup of certain phospholipids (sphingolipid and lysolipid substrates), forming an alcohol (often choline) and a cyclic phosphate. This toxin acts on lysophosphatidylethanolamine (LPE) and ceramide phosphoethanolamine (CPE) with high activity. This toxin acts on sphingomyelin (SM) with very low activity and is not active on lysophosphatidylserine (LPS), lysophosphatidylcholine (LPC) and lysophosphatidylglycerol (LPG). It acts by transphosphatidylation, releasing exclusively cyclic phosphate as second products. It is not surprising that spider toxins have affinity for ethanolamine-containing sphingolipids since they are common in insect prey. Induces dermonecrosis, hemolysis, increased vascular permeability, edema, inflammatory response, and platelet aggregation. This is Dermonecrotic toxin StSicTox-betaIB1i from Sicarius terrosus (Cave spider).